Here is a 437-residue protein sequence, read N- to C-terminus: Septin-7 (437 aa).

Ser-2 is modified (N-acetylserine). Tyr-30 is modified (phosphotyrosine). Positions 47–316 (RGFEFTLMVV…ENYRSRKLAA (270 aa)) constitute a Septin-type G domain. Residues 47–317 (RGFEFTLMVV…NYRSRKLAAV (271 aa)) form an interaction with SEPTIN12 region. The interval 57–64 (GESGLGKS) is G1 motif. 57-64 (GESGLGKS) is a GTP binding site. Ser-77 is modified (phosphoserine). GTP-binding positions include Thr-90, Gly-116, and 195 to 203 (KADTLTPEE). Residues 113–116 (DTPG) form a G3 motif region. Residues 194–197 (AKAD) are G4 motif. Thr-228 carries the post-translational modification Phosphothreonine. GTP contacts are provided by Gly-250 and Arg-265. Positions 332 to 433 (TKSPLAQMEE…SRTLEKNKKK (102 aa)) form a coiled coil. Ser-334 is modified (phosphoserine). Lys-373 is subject to N6-acetyllysine. A compositionally biased stretch (basic and acidic residues) spans 378–410 (ELQRRHEQMKKNLEAQHKELEEKRRQFEDEKAN). The disordered stretch occupies residues 378-437 (ELQRRHEQMKKNLEAQHKELEEKRRQFEDEKANWEAQQRILEQQNSSRTLEKNKKKGKIF). Phosphoserine is present on Ser-424. Thr-426 carries the phosphothreonine modification.

This sequence belongs to the TRAFAC class TrmE-Era-EngA-EngB-Septin-like GTPase superfamily. Septin GTPase family. Septins polymerize into heterooligomeric protein complexes that form filaments, and associate with cellular membranes, actin filaments and microtubules. GTPase activity is required for filament formation. Filaments are assembled from asymmetrical heterotrimers, composed of SEPTIN2, SEPTIN6 and SEPTIN7 that associate head-to-head to form a hexameric unit. Within the trimer, directly interacts with SEPTIN6, while interaction with SEPTIN2 seems indirect. In the absence of SEPTIN6, forms homodimers. Interacts directly with CENPE and links CENPE to septin filaments composed of SEPTIN2, SEPTIN6 and SEPTIN7. Interacts with SEPTIN5, SEPTIN8, SEPTIN9 and SEPTIN11. Component of a septin core octameric complex consisting of SEPTIN12, SEPTIN7, SEPTIN6 and SEPTIN2 or SEPTIN4 in the order 12-7-6-2-2-6-7-12 or 12-7-6-4-4-6-7-12 and located in the sperm annulus; the SEPTIN12:SEPTIN7 association is mediated by the respective GTP-binding domains.

It localises to the cytoplasm. It is found in the chromosome. The protein localises to the centromere. Its subcellular location is the kinetochore. The protein resides in the cytoskeleton. It localises to the spindle. It is found in the cleavage furrow. The protein localises to the midbody. Its subcellular location is the cilium axoneme. The protein resides in the cell projection. It localises to the cilium. It is found in the flagellum. Its function is as follows. Filament-forming cytoskeletal GTPase. Required for normal organization of the actin cytoskeleton. Required for normal progress through mitosis. Involved in cytokinesis. Required for normal association of CENPE with the kinetochore. Plays a role in ciliogenesis and collective cell movements. Forms a filamentous structure with SEPTIN12, SEPTIN6, SEPTIN2 and probably SEPTIN4 at the sperm annulus which is required for the structural integrity and motility of the sperm tail during postmeiotic differentiation. The protein is Septin-7 of Bos taurus (Bovine).